The following is a 121-amino-acid chain: MMLIFVKITSFLERYIMVRKFKSELVRISSESLPPQLRIEVEKQIITDVAHCMELVRKIENANISIYDKSLYTGKSVQNQFTTYNANNDDYESPYKTPKIKSNPSLDSSGSSHYSFIKAIK.

The interval 85-111 (NANNDDYESPYKTPKIKSNPSLDSSGS) is disordered. A compositionally biased stretch (polar residues) spans 100-111 (IKSNPSLDSSGS).

This is an uncharacterized protein from Dictyostelium discoideum (Social amoeba).